Reading from the N-terminus, the 387-residue chain is uncharacterized protein (387 aa).

Disordered stretches follow at residues 1-126 (MDGR…GDDE), 138-169 (GNQGGLVPGLAPIPSENENGKNDIEKNNRNEE), and 275-298 (SSIFSDSQAVTTDDEGISSTAGNK). A compositionally biased stretch (basic and acidic residues) spans 32–45 (SSDHRTSNSAESKK). Composition is skewed to polar residues over residues 49-63 (SGKSISDLGISNNDN) and 78-93 (DLSSRSTETSDNSKGT). Positions 155 to 169 (ENGKNDIEKNNRNEE) are enriched in basic and acidic residues. The span at 275–296 (SSIFSDSQAVTTDDEGISSTAG) shows a compositional bias: polar residues.

The protein belongs to the ThrE exporter (TC 2.A.79) family.

This is an uncharacterized protein from Saccharomyces cerevisiae (strain ATCC 204508 / S288c) (Baker's yeast).